The primary structure comprises 380 residues: Cytochrome b (380 aa).

Helical transmembrane passes span 34-54 (FGSLLGICLMTQILTGLLLAM), 78-99 (WLIRNLHANGASFFFICIYLHI), 114-134 (WNTGVMLLLTLMATAFVGYVL), and 179-199 (FFALHFLLPFVIAGLTLIHLT). Heme b is bound by residues H84 and H98. Heme b is bound by residues H183 and H197. H202 lines the a ubiquinone pocket. 4 helical membrane passes run 227–247 (LKDILGFMFMLLPLTTLALFS), 289–309 (LGGVLALAASVLILFLVPFLH), 321–341 (LSQLLFWVLVANLLILTWVGS), and 348–368 (FIIIGQLASLTYFTILLILFP).

Belongs to the cytochrome b family. As to quaternary structure, the cytochrome bc1 complex contains 11 subunits: 3 respiratory subunits (MT-CYB, CYC1 and UQCRFS1), 2 core proteins (UQCRC1 and UQCRC2) and 6 low-molecular weight proteins (UQCRH/QCR6, UQCRB/QCR7, UQCRQ/QCR8, UQCR10/QCR9, UQCR11/QCR10 and a cleavage product of UQCRFS1). This cytochrome bc1 complex then forms a dimer. Requires heme b as cofactor.

The protein localises to the mitochondrion inner membrane. In terms of biological role, component of the ubiquinol-cytochrome c reductase complex (complex III or cytochrome b-c1 complex) that is part of the mitochondrial respiratory chain. The b-c1 complex mediates electron transfer from ubiquinol to cytochrome c. Contributes to the generation of a proton gradient across the mitochondrial membrane that is then used for ATP synthesis. In Pterodroma hypoleuca (Bonin petrel), this protein is Cytochrome b (MT-CYB).